A 362-amino-acid polypeptide reads, in one-letter code: NAD(P)H-quinone oxidoreductase subunit 1, chloroplastic (362 aa).

Helical transmembrane passes span 29 to 49, 103 to 123, 128 to 148, 164 to 184, 202 to 222, 247 to 267, 303 to 323, and 335 to 355; these read ILPI…IVWL, IAVI…HFVL, IGVF…LMAG, AAQS…ISLL, FFGW…ISSL, YSGI…LVSS, TIGI…SITI, and LLNL…LLTT.

Belongs to the complex I subunit 1 family. As to quaternary structure, NDH is composed of at least 16 different subunits, 5 of which are encoded in the nucleus.

It is found in the plastid. The protein localises to the chloroplast thylakoid membrane. It carries out the reaction a plastoquinone + NADH + (n+1) H(+)(in) = a plastoquinol + NAD(+) + n H(+)(out). It catalyses the reaction a plastoquinone + NADPH + (n+1) H(+)(in) = a plastoquinol + NADP(+) + n H(+)(out). NDH shuttles electrons from NAD(P)H:plastoquinone, via FMN and iron-sulfur (Fe-S) centers, to quinones in the photosynthetic chain and possibly in a chloroplast respiratory chain. The immediate electron acceptor for the enzyme in this species is believed to be plastoquinone. Couples the redox reaction to proton translocation, and thus conserves the redox energy in a proton gradient. This is NAD(P)H-quinone oxidoreductase subunit 1, chloroplastic from Agrostis stolonifera (Creeping bentgrass).